The chain runs to 578 residues: MKDTIRQLIQQALTQLVTDGVLPEGLSPAIQVENARDKTHGDFASNIAMMLAKPAGMKPRDLAEKLINALPASADISKVEIAGPGFLNFFQNTDALANRLDAALADAHLGARKAGPAQKVVIDMSAPNLAKEMHVGHLRSTIIGDSVARVLEFLGDNVIRQNHVGDWGTQFGMLMAYLQENPITSDELSDLENFYRAAKKRFDESEEFATRARGLVVKLQAGDPECLALWTRFKDISLSHCQKTYELLNVKLTMADVMGESAYNDDLANVVADLKAKGLLVEDQGAQCVFLDEFKNSEGDPLPVIVQKADGGYLYATTDLAAVRYRSNVLKADRALYFVDQRQALHFNQVFEVARRAGFVGHPMQMEHMGFGTMNGADGRPFKTRDGGTVKLIDLLTEAKERAYALVKEKNPSLADDELRHIGEVVGIGAVKYADLSKHRTSDYSFNFELMLNFEGNTAPYLLYAYTRVAGVFRKLGKGFDEVDGKIVLHAAHEQDLAARLAQFGEILNNVAEKGTPHVLCSYLYDLAGLFSSFYENCPILAAETPSQQQSRLRLAALTGRTLKQGLELLGLETLERM.

Residues 127 to 137 (PNLAKEMHVGH) carry the 'HIGH' region motif.

It belongs to the class-I aminoacyl-tRNA synthetase family. In terms of assembly, monomer.

It is found in the cytoplasm. It catalyses the reaction tRNA(Arg) + L-arginine + ATP = L-arginyl-tRNA(Arg) + AMP + diphosphate. This chain is Arginine--tRNA ligase, found in Pseudomonas putida (strain ATCC 700007 / DSM 6899 / JCM 31910 / BCRC 17059 / LMG 24140 / F1).